We begin with the raw amino-acid sequence, 305 residues long: Mycothiol acetyltransferase (305 aa).

2 consecutive N-acetyltransferase domains span residues 10–153 (DRLD…LVVP) and 156–305 (ISLR…YARA). 1D-myo-inositol 2-(L-cysteinylamino)-2-deoxy-alpha-D-glucopyranoside is bound at residue E38. 82–84 (LAV) is a binding site for acetyl-CoA. Residues E183, K225, and E238 each coordinate 1D-myo-inositol 2-(L-cysteinylamino)-2-deoxy-alpha-D-glucopyranoside. Acetyl-CoA-binding positions include 242–244 (VAI) and 249–255 (QGRGLGR). Residue Y276 coordinates 1D-myo-inositol 2-(L-cysteinylamino)-2-deoxy-alpha-D-glucopyranoside. 281–286 (NESALH) is an acetyl-CoA binding site.

Belongs to the acetyltransferase family. MshD subfamily. As to quaternary structure, monomer.

It catalyses the reaction 1D-myo-inositol 2-(L-cysteinylamino)-2-deoxy-alpha-D-glucopyranoside + acetyl-CoA = mycothiol + CoA + H(+). Functionally, catalyzes the transfer of acetyl from acetyl-CoA to desacetylmycothiol (Cys-GlcN-Ins) to form mycothiol. This chain is Mycothiol acetyltransferase, found in Rhodococcus jostii (strain RHA1).